We begin with the raw amino-acid sequence, 372 residues long: SAM domain-containing protein SAMSN-1 (372 aa).

The disordered stretch occupies residues 1–71 (MLKRKPSNAS…SGGSLGKKVR (71 aa)). Positions 20 to 25 (RSSSFG) match the Important for interaction with 14-3-3 proteins motif. A phosphoserine mark is found at serine 23 and serine 34. Over residues 37-49 (KSDDSIEVHDREL) the composition is skewed to basic and acidic residues. Positions 52–63 (GSEEQSKTSSSG) are enriched in low complexity. Serine 74 carries the phosphoserine modification. The residue at position 76 (threonine 76) is a Phosphothreonine. Phosphoserine occurs at positions 90, 97, and 119. Residues 90–111 (SEEKEEESGEEALPYRNSDPMI) are disordered. Low complexity predominate over residues 129–146 (LYSGQSSSSGITSCSDGT). Positions 129 to 153 (LYSGQSSSSGITSCSDGTSNRDSFR) are disordered. The residue at position 160 (tyrosine 160) is a Phosphotyrosine. The 62-residue stretch at 163-224 (PFCGRAKVHT…KFIYVDVILE (62 aa)) folds into the SH3 domain. The SAM domain maps to 241–305 (ENHQTIQEFL…LSAAESLLDE (65 aa)). The tract at residues 304–372 (DEETTVEHEK…QKIAITESSD (69 aa)) is disordered. The segment covering 317-329 (PLSSNPDILSASQ) has biased composition (polar residues).

Interacts with FASLG. Interacts with phosphotyrosine containing proteins. Interacts (via SH3 domain) with CTTN. Interacts (phosphorylated at Ser-23) with YWHAB, YWHAE, YWHAG, YWHAH, YWHAZ and SFN. Interacts directly with SAP30 and HDAC1. Identified in a complex with SAP30 and HDAC1. Detected in spleen and lymph node (at protein level).

It localises to the nucleus. Its subcellular location is the cytoplasm. The protein resides in the cell projection. The protein localises to the ruffle. In terms of biological role, negative regulator of B-cell activation. Down-regulates cell proliferation (in vitro). Promotes RAC1-dependent membrane ruffle formation and reorganization of the actin cytoskeleton. Regulates cell spreading and cell polarization. Stimulates HDAC1 activity. Regulates LYN activity by modulating its tyrosine phosphorylation. The chain is SAM domain-containing protein SAMSN-1 (Samsn1) from Mus musculus (Mouse).